A 388-amino-acid chain; its full sequence is Succinate--CoA ligase [ADP-forming] subunit beta (388 aa).

Positions 9–244 (KQLFAEYGLP…PSQDDPREAH (236 aa)) constitute an ATP-grasp domain. ATP-binding positions include Lys-46, 53 to 55 (GRG), Glu-99, Thr-102, and Glu-107. Mg(2+)-binding residues include Asn-199 and Asp-213. Substrate is bound by residues Asn-264 and 321–323 (GIV).

Belongs to the succinate/malate CoA ligase beta subunit family. In terms of assembly, heterotetramer of two alpha and two beta subunits. It depends on Mg(2+) as a cofactor.

It carries out the reaction succinate + ATP + CoA = succinyl-CoA + ADP + phosphate. It catalyses the reaction GTP + succinate + CoA = succinyl-CoA + GDP + phosphate. The protein operates within carbohydrate metabolism; tricarboxylic acid cycle; succinate from succinyl-CoA (ligase route): step 1/1. Functionally, succinyl-CoA synthetase functions in the citric acid cycle (TCA), coupling the hydrolysis of succinyl-CoA to the synthesis of either ATP or GTP and thus represents the only step of substrate-level phosphorylation in the TCA. The beta subunit provides nucleotide specificity of the enzyme and binds the substrate succinate, while the binding sites for coenzyme A and phosphate are found in the alpha subunit. The polypeptide is Succinate--CoA ligase [ADP-forming] subunit beta (Pseudomonas fluorescens (strain ATCC BAA-477 / NRRL B-23932 / Pf-5)).